We begin with the raw amino-acid sequence, 380 residues long: UPF0754 membrane protein Bsph_0374 (380 aa).

Helical transmembrane passes span 1 to 21 (MDNF…IGGV) and 357 to 377 (MITV…GLIV).

It belongs to the UPF0754 family.

It is found in the cell membrane. The chain is UPF0754 membrane protein Bsph_0374 from Lysinibacillus sphaericus (strain C3-41).